Reading from the N-terminus, the 339-residue chain is UDP-N-acetylenolpyruvoylglucosamine reductase (339 aa).

The FAD-binding PCMH-type domain maps to 19 to 189 (VDVQARLFAQ…LRVRFKLSRE (171 aa)). Arginine 166 is a catalytic residue. The active-site Proton donor is serine 239. Glutamate 335 is an active-site residue.

It belongs to the MurB family. The cofactor is FAD.

Its subcellular location is the cytoplasm. It catalyses the reaction UDP-N-acetyl-alpha-D-muramate + NADP(+) = UDP-N-acetyl-3-O-(1-carboxyvinyl)-alpha-D-glucosamine + NADPH + H(+). Its pathway is cell wall biogenesis; peptidoglycan biosynthesis. Its function is as follows. Cell wall formation. This chain is UDP-N-acetylenolpyruvoylglucosamine reductase, found in Pseudomonas syringae pv. tomato (strain ATCC BAA-871 / DC3000).